Here is a 1167-residue protein sequence, read N- to C-terminus: DNA-directed RNA polymerase subunit beta (1167 aa).

This sequence belongs to the RNA polymerase beta chain family. As to quaternary structure, the RNAP catalytic core consists of 2 alpha, 1 beta, 1 beta' and 1 omega subunit. When a sigma factor is associated with the core the holoenzyme is formed, which can initiate transcription.

It catalyses the reaction RNA(n) + a ribonucleoside 5'-triphosphate = RNA(n+1) + diphosphate. DNA-dependent RNA polymerase catalyzes the transcription of DNA into RNA using the four ribonucleoside triphosphates as substrates. This is DNA-directed RNA polymerase subunit beta from Mycolicibacterium vanbaalenii (strain DSM 7251 / JCM 13017 / BCRC 16820 / KCTC 9966 / NRRL B-24157 / PYR-1) (Mycobacterium vanbaalenii).